The primary structure comprises 217 residues: Probable disulfide bond formation protein D (217 aa).

Residues 1 to 28 form the signal peptide; the sequence is MKSSNKLMALGIVFSIAVLIVIGTIVYS. Residues Cys-66 and Cys-69 are joined by a disulfide bond.

This sequence belongs to the thioredoxin family. DsbA subfamily.

May be required for disulfide bond formation in some proteins. In Bacillus anthracis, this protein is Probable disulfide bond formation protein D (bdbD).